Reading from the N-terminus, the 413-residue chain is Serine hydroxymethyltransferase (413 aa).

Residues L119 and 123–125 contribute to the (6S)-5,6,7,8-tetrahydrofolate site; that span reads GHL. K228 bears the N6-(pyridoxal phosphate)lysine mark. 351–353 is a binding site for (6S)-5,6,7,8-tetrahydrofolate; sequence SPF.

It belongs to the SHMT family. As to quaternary structure, homodimer. It depends on pyridoxal 5'-phosphate as a cofactor.

The protein localises to the cytoplasm. The catalysed reaction is (6R)-5,10-methylene-5,6,7,8-tetrahydrofolate + glycine + H2O = (6S)-5,6,7,8-tetrahydrofolate + L-serine. It functions in the pathway one-carbon metabolism; tetrahydrofolate interconversion. The protein operates within amino-acid biosynthesis; glycine biosynthesis; glycine from L-serine: step 1/1. Catalyzes the reversible interconversion of serine and glycine with tetrahydrofolate (THF) serving as the one-carbon carrier. This reaction serves as the major source of one-carbon groups required for the biosynthesis of purines, thymidylate, methionine, and other important biomolecules. Also exhibits THF-independent aldolase activity toward beta-hydroxyamino acids, producing glycine and aldehydes, via a retro-aldol mechanism. This is Serine hydroxymethyltransferase from Anoxybacillus flavithermus (strain DSM 21510 / WK1).